Consider the following 862-residue polypeptide: Putative cargo-transport protein ypp1 (862 aa).

3 TPR repeats span residues 342–377 (QQIFRSLVFFLRHIEEFEEASEAFEIYKFLCVKSHE), 460–493 (SFMYYQANNPSLRERYHQKSVQSYQKCLEKQPTN), and 494–527 (TNALFHLAMQYSERRAITDAMQIVRRLLEVNPKY). Residues serine 632, serine 633, and serine 637 each carry the phosphoserine modification. 4 TPR repeats span residues 665–698 (ILGFSRKSSLKRSTVLSKKSHSSYKENFQLRRGK), 705–738 (QKLWLTAASLFLKSGNDDQARSALLEAKKIDHEC), 740–772 (WVYYLNGLSLLQQGKEVEGYEQLDVAHYLDPED), and 814–847 (PEAWYYTAEIFRQLGDLKQAAFSYDYCIQLADTN).

It belongs to the YPP1 family.

It is found in the cytoplasm. Involved in endocytosis. This is Putative cargo-transport protein ypp1 (ypp1) from Schizosaccharomyces pombe (strain 972 / ATCC 24843) (Fission yeast).